We begin with the raw amino-acid sequence, 139 residues long: Gastrula zinc finger protein XlCGF67.1 (139 aa).

5 consecutive C2H2-type zinc fingers follow at residues 6–28 (VSCP…KKVH), 33–55 (YSCS…LRTH), 61–83 (YSCS…KRIH), 89–111 (FSCQ…QKIH), and 117–139 (FSCS…SRIH).

The protein belongs to the krueppel C2H2-type zinc-finger protein family.

Its subcellular location is the nucleus. Functionally, may be involved in transcriptional regulation. The sequence is that of Gastrula zinc finger protein XlCGF67.1 from Xenopus laevis (African clawed frog).